Reading from the N-terminus, the 574-residue chain is 2-succinyl-5-enolpyruvyl-6-hydroxy-3-cyclohexene-1-carboxylate synthase (574 aa).

Belongs to the TPP enzyme family. MenD subfamily. In terms of assembly, homodimer. Requires Mg(2+) as cofactor. Mn(2+) serves as cofactor. The cofactor is thiamine diphosphate.

The enzyme catalyses isochorismate + 2-oxoglutarate + H(+) = 5-enolpyruvoyl-6-hydroxy-2-succinyl-cyclohex-3-ene-1-carboxylate + CO2. Its pathway is quinol/quinone metabolism; 1,4-dihydroxy-2-naphthoate biosynthesis; 1,4-dihydroxy-2-naphthoate from chorismate: step 2/7. The protein operates within quinol/quinone metabolism; menaquinone biosynthesis. Its function is as follows. Catalyzes the thiamine diphosphate-dependent decarboxylation of 2-oxoglutarate and the subsequent addition of the resulting succinic semialdehyde-thiamine pyrophosphate anion to isochorismate to yield 2-succinyl-5-enolpyruvyl-6-hydroxy-3-cyclohexene-1-carboxylate (SEPHCHC). This Rubrobacter xylanophilus (strain DSM 9941 / JCM 11954 / NBRC 16129 / PRD-1) protein is 2-succinyl-5-enolpyruvyl-6-hydroxy-3-cyclohexene-1-carboxylate synthase.